The sequence spans 405 residues: L-carnitine CoA-transferase (405 aa).

The CoA site is built by lysine 97 and arginine 104. Aspartate 169 serves as the catalytic Nucleophile.

Belongs to the CoA-transferase III family. CaiB subfamily. In terms of assembly, homodimer.

It is found in the cytoplasm. The enzyme catalyses crotonobetainyl-CoA + (R)-carnitine = crotonobetaine + (R)-carnitinyl-CoA. It carries out the reaction 4-(trimethylamino)butanoyl-CoA + (R)-carnitine = (R)-carnitinyl-CoA + 4-(trimethylamino)butanoate. It functions in the pathway amine and polyamine metabolism; carnitine metabolism. Catalyzes the reversible transfer of the CoA moiety from gamma-butyrobetainyl-CoA to L-carnitine to generate L-carnitinyl-CoA and gamma-butyrobetaine. Is also able to catalyze the reversible transfer of the CoA moiety from gamma-butyrobetainyl-CoA or L-carnitinyl-CoA to crotonobetaine to generate crotonobetainyl-CoA. The chain is L-carnitine CoA-transferase from Escherichia coli O7:K1 (strain IAI39 / ExPEC).